Reading from the N-terminus, the 213-residue chain is 3-dehydroquinate dehydratase (213 aa).

3-dehydroquinate contacts are provided by residues 27-29 and Arg-53; that span reads EVR. The Proton donor/acceptor role is filled by His-111. Residue Lys-138 is the Schiff-base intermediate with substrate of the active site. 2 residues coordinate 3-dehydroquinate: Arg-175 and Gln-197.

This sequence belongs to the type-I 3-dehydroquinase family. As to quaternary structure, homodimer.

The catalysed reaction is 3-dehydroquinate = 3-dehydroshikimate + H2O. It functions in the pathway metabolic intermediate biosynthesis; chorismate biosynthesis; chorismate from D-erythrose 4-phosphate and phosphoenolpyruvate: step 3/7. Its function is as follows. Involved in the third step of the chorismate pathway, which leads to the biosynthesis of aromatic amino acids. Catalyzes the cis-dehydration of 3-dehydroquinate (DHQ) and introduces the first double bond of the aromatic ring to yield 3-dehydroshikimate. The chain is 3-dehydroquinate dehydratase from Thermococcus gammatolerans (strain DSM 15229 / JCM 11827 / EJ3).